Consider the following 283-residue polypeptide: Pre-protein-C8 (283 aa).

A signal peptide (tat-type signal) is located at residues 1-40 (MKEDNNTSEESGRINRRNVLKTVGAAGLFAAGSTGMAAAA). The interval 61–75 (ARELAKTPAFRELAQ) is helix-loop-helix (HLH) region.

Immunity protein HalI interacts with Halocin-C8; the interaction is direct. In terms of processing, predicted to be exported by the Tat system. The position of the signal peptide cleavage has not been experimentally proven.

It localises to the secreted. Its subcellular location is the cell membrane. Functionally, has antibacterial activity against a wide variety of haloarchaeons. Causes cell lysis and death, possibly by disrupting the cell wall. Its function is as follows. Acts as an immunity protein for halocin-C8. Able to block the halocin-C8 activity by sequestering the activity of halocin-C8 through specific and direct binding. In Halobacterium sp. (strain AS7092), this protein is Pre-protein-C8 (proC8).